We begin with the raw amino-acid sequence, 139 residues long: MASLKKSRRVRLILFSGVALVSATALIGYAMRDGIQFFRTPTEVATDPPAANEVLRIGGMVEHGSLVRDGANFSFRVTDGETSFPISYVGIVPDLFREGEGTIATGSVIGGVFRATEILAKHDEVYMPSELAEMEALRD.

Residues 1-9 (MASLKKSRR) are Cytoplasmic-facing. Residues 10–30 (VRLILFSGVALVSATALIGYA) traverse the membrane as a helical; Signal-anchor for type II membrane protein segment. The Periplasmic segment spans residues 31 to 139 (MRDGIQFFRT…ELAEMEALRD (109 aa)). His122 and Tyr126 together coordinate heme.

Belongs to the CcmE/CycJ family.

It is found in the cell inner membrane. In terms of biological role, heme chaperone required for the biogenesis of c-type cytochromes. Transiently binds heme delivered by CcmC and transfers the heme to apo-cytochromes in a process facilitated by CcmF and CcmH. This is Cytochrome c-type biogenesis protein CcmE 2 from Ruegeria pomeroyi (strain ATCC 700808 / DSM 15171 / DSS-3) (Silicibacter pomeroyi).